The primary structure comprises 183 residues: Ribosome maturation factor RimM (183 aa).

The PRC barrel domain maps to 104 to 183; the sequence is EGDYYWKDLI…TIEVDWDPGF (80 aa).

The protein belongs to the RimM family. As to quaternary structure, binds ribosomal protein uS19.

The protein localises to the cytoplasm. In terms of biological role, an accessory protein needed during the final step in the assembly of 30S ribosomal subunit, possibly for assembly of the head region. Essential for efficient processing of 16S rRNA. May be needed both before and after RbfA during the maturation of 16S rRNA. It has affinity for free ribosomal 30S subunits but not for 70S ribosomes. The protein is Ribosome maturation factor RimM of Cronobacter sakazakii (strain ATCC BAA-894) (Enterobacter sakazakii).